The chain runs to 256 residues: Imidazole glycerol phosphate synthase subunit HisF (256 aa).

Residues Asp-12 and Asp-131 contribute to the active site.

Belongs to the HisA/HisF family. Heterodimer of HisH and HisF.

The protein localises to the cytoplasm. It carries out the reaction 5-[(5-phospho-1-deoxy-D-ribulos-1-ylimino)methylamino]-1-(5-phospho-beta-D-ribosyl)imidazole-4-carboxamide + L-glutamine = D-erythro-1-(imidazol-4-yl)glycerol 3-phosphate + 5-amino-1-(5-phospho-beta-D-ribosyl)imidazole-4-carboxamide + L-glutamate + H(+). It participates in amino-acid biosynthesis; L-histidine biosynthesis; L-histidine from 5-phospho-alpha-D-ribose 1-diphosphate: step 5/9. Its function is as follows. IGPS catalyzes the conversion of PRFAR and glutamine to IGP, AICAR and glutamate. The HisF subunit catalyzes the cyclization activity that produces IGP and AICAR from PRFAR using the ammonia provided by the HisH subunit. The sequence is that of Imidazole glycerol phosphate synthase subunit HisF from Stutzerimonas stutzeri (strain A1501) (Pseudomonas stutzeri).